A 337-amino-acid polypeptide reads, in one-letter code: Cytidine deaminase 2 (337 aa).

CMP/dCMP-type deaminase domains follow at residues 43 to 164 and 199 to 320; these read TDPI…FSSL and LDCS…LKYL. 84 to 86 is a binding site for substrate; sequence NVD. H97 is a binding site for Zn(2+). The active-site Proton donor is E99. Positions 132 and 135 each coordinate Zn(2+).

It belongs to the cytidine and deoxycytidylate deaminase family. Homodimer. The cofactor is Zn(2+).

The enzyme catalyses cytidine + H2O + H(+) = uridine + NH4(+). It catalyses the reaction 2'-deoxycytidine + H2O + H(+) = 2'-deoxyuridine + NH4(+). Functionally, this enzyme scavenges exogenous and endogenous cytidine and 2'-deoxycytidine for UMP synthesis. The polypeptide is Cytidine deaminase 2 (CDA2) (Arabidopsis thaliana (Mouse-ear cress)).